The sequence spans 863 residues: Envelope glycoprotein gp160 (863 aa).

The N-terminal stretch at 1–32 (MIVTMKAMEKRNKKLWTLYLAMALITPCLSLR) is a signal peptide. The Extracellular portion of the chain corresponds to 33–684 (QLYATVYAGV…ITKWLWYIKI (652 aa)). Cysteine 54 and cysteine 74 are joined by a disulfide. Residues asparagine 59 and asparagine 88 are each glycosylated (N-linked (GlcNAc...) asparagine; by host). Intrachain disulfides connect cysteine 119/cysteine 201, cysteine 126/cysteine 192, cysteine 131/cysteine 146, cysteine 214/cysteine 243, and cysteine 224/cysteine 235. The V1 stretch occupies residues 131 to 145 (CTNIAGTTNENLMKK). Residues 146–192 (CEFNVTTVIKDKKEKKQALFYVSDLMELNETSSTNKTNSKMYTLTNC) are V2. Asparagine 149, asparagine 174, asparagine 180, asparagine 193, asparagine 225, asparagine 230, asparagine 237, asparagine 258, asparagine 285, asparagine 289, asparagine 320, asparagine 330, asparagine 350, asparagine 356, and asparagine 360 each carry an N-linked (GlcNAc...) asparagine; by host glycan. The tract at residues 292 to 326 (CERPQIDIQEMRIGPMAWYSMGIGGTAGNSSRAAY) is V3. A disulfide bridge connects residues cysteine 292 and cysteine 327. A CD4-binding loop region spans residues 362 to 372 (SSGGDLEVTHL). Cystine bridges form between cysteine 376-cysteine 442 and cysteine 383-cysteine 415. The tract at residues 383 to 415 (CNTAKMFNYTFSCNGTTCSVSNVSQGNNGTLPC) is V4. Residues asparagine 390, asparagine 396, asparagine 404, asparagine 410, asparagine 439, asparagine 445, asparagine 458, and asparagine 463 are each glycosylated (N-linked (GlcNAc...) asparagine; by host). V5 regions lie at residues 458–469 (NSSNNNVTFRPI) and 460–469 (SNNNVTFRPI). The tract at residues 514–534 (AVGLGMLFLGVLSAAGSTMGA) is fusion peptide. Residues 576-594 (RQLRARLLALETLLQNQQL) are immunosuppression. A disulfide bridge connects residues cysteine 600 and cysteine 606. N-linked (GlcNAc...) asparagine; by host glycans are attached at residues asparagine 613, asparagine 619, and asparagine 637. A coiled-coil region spans residues 633–667 (RQISNISSTIYEEIQKAQVQQEQNEKKLLELDEWA). The segment at 662–683 (ELDEWASIWNWLDITKWLWYIK) is MPER; binding to GalCer. A helical membrane pass occupies residues 685–705 (AIIIVGALVGVRVIMIVLNIV). Over 706–863 (KNIRQGYQPL…IRQGLERSLL (158 aa)) the chain is Cytoplasmic. The YXXL motif; contains endocytosis signal signature appears at 712–715 (YQPL). A Di-leucine internalization motif motif is present at residues 862–863 (LL).

The protein belongs to the HIV-1 env protein family. In terms of assembly, the mature envelope protein (Env) consists of a homotrimer of non-covalently associated gp120-gp41 heterodimers. The resulting complex protrudes from the virus surface as a spike. There seems to be as few as 10 spikes on the average virion. Interacts with host CD4, CCR5 and CXCR4. Gp120 also interacts with the C-type lectins CD209/DC-SIGN and CLEC4M/DC-SIGNR (collectively referred to as DC-SIGN(R)). Gp120 and gp41 interact with GalCer. Gp120 interacts with host ITGA4/ITGB7 complex; on CD4+ T-cells, this interaction results in rapid activation of integrin ITGAL/LFA-1, which facilitates efficient cell-to-cell spreading of HIV-1. Gp120 interacts with cell-associated heparan sulfate; this interaction increases virus infectivity on permissive cells and may be involved in infection of CD4- cells. As to quaternary structure, the mature envelope protein (Env) consists of a homotrimer of non-covalently associated gp120-gp41 heterodimers. The resulting complex protrudes from the virus surface as a spike. There seems to be as few as 10 spikes on the average virion. Highly glycosylated by host. The high number of glycan on the protein is reffered to as 'glycan shield' because it contributes to hide protein sequence from adaptive immune system. In terms of processing, palmitoylation of the transmembrane protein and of Env polyprotein (prior to its proteolytic cleavage) is essential for their association with host cell membrane lipid rafts. Palmitoylation is therefore required for envelope trafficking to classical lipid rafts, but not for viral replication. Post-translationally, specific enzymatic cleavages in vivo yield mature proteins. Envelope glycoproteins are synthesized as an inactive precursor that is heavily N-glycosylated and processed likely by host cell furin in the Golgi to yield the mature SU and TM proteins. The cleavage site between SU and TM requires the minimal sequence [KR]-X-[KR]-R. About 2 of the 9 disulfide bonds of gp41 are reduced by P4HB/PDI, following binding to CD4 receptor.

It is found in the virion membrane. The protein localises to the host cell membrane. It localises to the host endosome membrane. Its function is as follows. Oligomerizes in the host endoplasmic reticulum into predominantly trimers. In a second time, gp160 transits in the host Golgi, where glycosylation is completed. The precursor is then proteolytically cleaved in the trans-Golgi and thereby activated by cellular furin or furin-like proteases to produce gp120 and gp41. Functionally, attaches the virus to the host lymphoid cell by binding to the primary receptor CD4. This interaction induces a structural rearrangement creating a high affinity binding site for a chemokine coreceptor like CXCR4 and/or CCR5. Acts as a ligand for CD209/DC-SIGN and CLEC4M/DC-SIGNR, which are respectively found on dendritic cells (DCs), and on endothelial cells of liver sinusoids and lymph node sinuses. These interactions allow capture of viral particles at mucosal surfaces by these cells and subsequent transmission to permissive cells. HIV subverts the migration properties of dendritic cells to gain access to CD4+ T-cells in lymph nodes. Virus transmission to permissive T-cells occurs either in trans (without DCs infection, through viral capture and transmission), or in cis (following DCs productive infection, through the usual CD4-gp120 interaction), thereby inducing a robust infection. In trans infection, bound virions remain infectious over days and it is proposed that they are not degraded, but protected in non-lysosomal acidic organelles within the DCs close to the cell membrane thus contributing to the viral infectious potential during DCs' migration from the periphery to the lymphoid tissues. On arrival at lymphoid tissues, intact virions recycle back to DCs' cell surface allowing virus transmission to CD4+ T-cells. Acts as a class I viral fusion protein. Under the current model, the protein has at least 3 conformational states: pre-fusion native state, pre-hairpin intermediate state, and post-fusion hairpin state. During fusion of viral and target intracellular membranes, the coiled coil regions (heptad repeats) assume a trimer-of-hairpins structure, positioning the fusion peptide in close proximity to the C-terminal region of the ectodomain. The formation of this structure appears to drive apposition and subsequent fusion of viral and target cell membranes. Complete fusion occurs in host cell endosomes and is dynamin-dependent, however some lipid transfer might occur at the plasma membrane. The virus undergoes clathrin-dependent internalization long before endosomal fusion, thus minimizing the surface exposure of conserved viral epitopes during fusion and reducing the efficacy of inhibitors targeting these epitopes. Membranes fusion leads to delivery of the nucleocapsid into the cytoplasm. In Human immunodeficiency virus type 1 group O (isolate ANT70) (HIV-1), this protein is Envelope glycoprotein gp160.